We begin with the raw amino-acid sequence, 185 residues long: Ribosome-recycling factor (185 aa).

Belongs to the RRF family.

Its subcellular location is the cytoplasm. Responsible for the release of ribosomes from messenger RNA at the termination of protein biosynthesis. May increase the efficiency of translation by recycling ribosomes from one round of translation to another. In Desulforapulum autotrophicum (strain ATCC 43914 / DSM 3382 / VKM B-1955 / HRM2) (Desulfobacterium autotrophicum), this protein is Ribosome-recycling factor.